We begin with the raw amino-acid sequence, 349 residues long: UDP-3-O-acylglucosamine N-acyltransferase (349 aa).

H248 serves as the catalytic Proton acceptor.

The protein belongs to the transferase hexapeptide repeat family. LpxD subfamily. As to quaternary structure, homotrimer.

It carries out the reaction a UDP-3-O-[(3R)-3-hydroxyacyl]-alpha-D-glucosamine + a (3R)-hydroxyacyl-[ACP] = a UDP-2-N,3-O-bis[(3R)-3-hydroxyacyl]-alpha-D-glucosamine + holo-[ACP] + H(+). Its pathway is bacterial outer membrane biogenesis; LPS lipid A biosynthesis. Its function is as follows. Catalyzes the N-acylation of UDP-3-O-acylglucosamine using 3-hydroxyacyl-ACP as the acyl donor. Is involved in the biosynthesis of lipid A, a phosphorylated glycolipid that anchors the lipopolysaccharide to the outer membrane of the cell. The chain is UDP-3-O-acylglucosamine N-acyltransferase from Gloeothece citriformis (strain PCC 7424) (Cyanothece sp. (strain PCC 7424)).